The following is a 208-amino-acid chain: LexA repressor (208 aa).

Positions 28 to 48 (RAEIARELGFRSANAAEEHLK) form a DNA-binding region, H-T-H motif. Catalysis depends on for autocatalytic cleavage activity residues serine 125 and lysine 162.

It belongs to the peptidase S24 family. As to quaternary structure, homodimer.

It carries out the reaction Hydrolysis of Ala-|-Gly bond in repressor LexA.. In terms of biological role, represses a number of genes involved in the response to DNA damage (SOS response), including recA and lexA. In the presence of single-stranded DNA, RecA interacts with LexA causing an autocatalytic cleavage which disrupts the DNA-binding part of LexA, leading to derepression of the SOS regulon and eventually DNA repair. In Aliivibrio fischeri (strain MJ11) (Vibrio fischeri), this protein is LexA repressor.